A 345-amino-acid polypeptide reads, in one-letter code: Phosphoribosylformylglycinamidine cyclo-ligase (345 aa).

Belongs to the AIR synthase family.

Its subcellular location is the cytoplasm. It carries out the reaction 2-formamido-N(1)-(5-O-phospho-beta-D-ribosyl)acetamidine + ATP = 5-amino-1-(5-phospho-beta-D-ribosyl)imidazole + ADP + phosphate + H(+). It functions in the pathway purine metabolism; IMP biosynthesis via de novo pathway; 5-amino-1-(5-phospho-D-ribosyl)imidazole from N(2)-formyl-N(1)-(5-phospho-D-ribosyl)glycinamide: step 2/2. The polypeptide is Phosphoribosylformylglycinamidine cyclo-ligase (Tolumonas auensis (strain DSM 9187 / NBRC 110442 / TA 4)).